The chain runs to 326 residues: Apoptosis facilitator Bcl-2-like protein 14 (326 aa).

Residue S44 is modified to Phosphoserine. The interval 99–127 (TEKEEEPPSSPKEIHAQGPFPVERQGRNQ) is disordered. The BH3 motif lies at 211–225 (IVELLKYSGDQLGRE). A BH2 motif is present at residues 307–314 (WVQQNGGW).

It belongs to the Bcl-2 family. Post-translationally, phosphorylated by MELK, leading to inhibit its pro-apoptotic function.

The protein localises to the cytoplasm. Its function is as follows. Plays a role in apoptosis. In Rattus norvegicus (Rat), this protein is Apoptosis facilitator Bcl-2-like protein 14 (Bcl2l14).